Consider the following 337-residue polypeptide: MNAPQTNDTAADGAATEAIAADSGRRALTRREQKEAYENNKLFKRIARQVGQAIGDYNMIEAGDKVMVCLSGGKDSYAMLDVLLRLRERAPIDFDIVAVNLDQKQPGFPEHVLPEYLTQIGVPFHIENQDTYSIVKRLVPEGKTTCSLCSRLRRGILYRVAGELGATKIALGHHRDDILQTLLLNMFYGGKLKGMPPKLQSDDGRNVVIRPLAYVKETDLEKYAELREFPIIPCNLCGSQPNLKRAEMKALIREWDKRFPGRVDNMFSALANVVPSHLMDTGLFPFASLRATGVADPLGDIAFDEEPCASGDATGDAAGNTTSGAARPISIVQFDDL.

The PP-loop motif motif lies at 71–76 (SGGKDS). C146, C149, and C237 together coordinate [4Fe-4S] cluster.

It belongs to the TtcA family. As to quaternary structure, homodimer. Mg(2+) is required as a cofactor. [4Fe-4S] cluster serves as cofactor.

The protein localises to the cytoplasm. It carries out the reaction cytidine(32) in tRNA + S-sulfanyl-L-cysteinyl-[cysteine desulfurase] + AH2 + ATP = 2-thiocytidine(32) in tRNA + L-cysteinyl-[cysteine desulfurase] + A + AMP + diphosphate + H(+). It functions in the pathway tRNA modification. Its function is as follows. Catalyzes the ATP-dependent 2-thiolation of cytidine in position 32 of tRNA, to form 2-thiocytidine (s(2)C32). The sulfur atoms are provided by the cysteine/cysteine desulfurase (IscS) system. The sequence is that of tRNA-cytidine(32) 2-sulfurtransferase from Burkholderia vietnamiensis (strain G4 / LMG 22486) (Burkholderia cepacia (strain R1808)).